Consider the following 81-residue polypeptide: Toxin F-VIII (81 aa).

Residues 1-21 form the signal peptide; it reads MKTLLLTLLVVTIVCLDLAST. 4 disulfide bridges follow: cysteine 24-cysteine 43, cysteine 38-cysteine 60, cysteine 62-cysteine 73, and cysteine 74-cysteine 79.

It belongs to the three-finger toxin family. Short-chain subfamily. Orphan group XI sub-subfamily. In terms of tissue distribution, expressed by the venom gland.

Its subcellular location is the secreted. In terms of biological role, is cytotoxic against A549 cells (LC(50)=106 ug/ml). The polypeptide is Toxin F-VIII (Dendroaspis angusticeps (Eastern green mamba)).